The sequence spans 339 residues: Ketol-acid reductoisomerase (NADP(+)) (339 aa).

The KARI N-terminal Rossmann domain maps to 1 to 182; the sequence is MRVYYDRDAD…GGGRAGIIET (182 aa). NADP(+) contacts are provided by residues 24-27, R48, S51, S53, and 83-86; these read YGSQ and DELQ. H108 is an active-site residue. G134 contributes to the NADP(+) binding site. Positions 183 to 328 constitute a KARI C-terminal knotted domain; the sequence is TFREECETDL…ARLRDMMPWI (146 aa). Residues D191, E195, E227, and E231 each contribute to the Mg(2+) site. S252 is a binding site for substrate.

The protein belongs to the ketol-acid reductoisomerase family. Mg(2+) serves as cofactor.

The enzyme catalyses (2R)-2,3-dihydroxy-3-methylbutanoate + NADP(+) = (2S)-2-acetolactate + NADPH + H(+). It carries out the reaction (2R,3R)-2,3-dihydroxy-3-methylpentanoate + NADP(+) = (S)-2-ethyl-2-hydroxy-3-oxobutanoate + NADPH + H(+). The protein operates within amino-acid biosynthesis; L-isoleucine biosynthesis; L-isoleucine from 2-oxobutanoate: step 2/4. It participates in amino-acid biosynthesis; L-valine biosynthesis; L-valine from pyruvate: step 2/4. Its function is as follows. Involved in the biosynthesis of branched-chain amino acids (BCAA). Catalyzes an alkyl-migration followed by a ketol-acid reduction of (S)-2-acetolactate (S2AL) to yield (R)-2,3-dihydroxy-isovalerate. In the isomerase reaction, S2AL is rearranged via a Mg-dependent methyl migration to produce 3-hydroxy-3-methyl-2-ketobutyrate (HMKB). In the reductase reaction, this 2-ketoacid undergoes a metal-dependent reduction by NADPH to yield (R)-2,3-dihydroxy-isovalerate. The protein is Ketol-acid reductoisomerase (NADP(+)) of Nitrobacter winogradskyi (strain ATCC 25391 / DSM 10237 / CIP 104748 / NCIMB 11846 / Nb-255).